The following is a 452-amino-acid chain: MPEFLEDPSVLTKDKLKSELVANNVTLPAGEQRKDVYVQLYLQHLTARNRPPLAAGANSKGPPDFSSDEEREPTPVLGSGASVGRGRGAVGRKATKKTDKPRPEDKDDLDVTELSNEELLEQLVRYGVNPGPIVGTTRKLYEKKLLKLREQGAESRSSTPLPTVSSSAENTRQNGSNDSDRYSDNDEDSKIELKLEKREPLKGRAKTPVTLKQRRIEHNQSYSEAGVTETEWTSGSSKGGPLQALTRESTRGSRRTPRRRVEPSQHFRVDGAVISESTPIAETIKASSNDSLVANRLTGNFKHASSILPITEFSDITRRTPKKPLTRAEVGEKTEERRVERDILKEMFPYEASTPTGISASCRRPIKGAAGRPLELSDFRMEESFSSKYVPKYVPLADVKSEKTKKGRSVPMWIKMLLFALVAGFLFLVYQAMETNQGNPFTNFLQDTKISN.

A nucleoplasmic region spans residues 1 to 409; sequence MPEFLEDPSV…KSEKTKKGRS (409 aa). The 44-residue stretch at 5-48 folds into the LEM-like domain; sequence LEDPSVLTKDKLKSELVANNVTLPAGEQRKDVYVQLYLQHLTAR. Disordered regions lie at residues 48–113 and 149–264; these read RNRP…DVTE and REQG…VEPS. The linker stretch occupies residues 49 to 107; it reads NRPPLAAGANSKGPPDFSSDEEREPTPVLGSGASVGRGRGAVGRKATKKTDKPRPEDKD. A phosphoserine mark is found at S66 and S67. Phosphothreonine is present on T74. A Phosphoserine modification is found at S82. Omega-N-methylarginine is present on residues R85 and R87. Over residues 96-105 the composition is skewed to basic and acidic residues; that stretch reads KKTDKPRPED. Residues 108 to 152 enclose the LEM domain; that stretch reads DLDVTELSNEELLEQLVRYGVNPGPIVGTTRKLYEKKLLKLREQG. Residues 137–242 are NAKAP95-binding N; the sequence is TRKLYEKKLL…TSGSSKGGPL (106 aa). Over residues 154-177 the composition is skewed to polar residues; the sequence is ESRSSTPLPTVSSSAENTRQNGSN. Phosphoserine is present on residues S155 and S158. Position 159 is a phosphothreonine (T159). S165, S167, S176, S179, and S183 each carry phosphoserine. Over residues 178-202 the composition is skewed to basic and acidic residues; that stretch reads DSDRYSDNDEDSKIELKLEKREPLK. K206 is subject to N6-acetyllysine. The interval 298–370 is binds lamins B; it reads TGNFKHASSI…SCRRPIKGAA (73 aa). An NAKAP95-binding C region spans residues 299–373; it reads GNFKHASSIL…RPIKGAAGRP (75 aa). A phosphoserine mark is found at S305, S306, and S361. K388 is modified (N6-acetyllysine). The chain crosses the membrane as a helical; Signal-anchor for type II membrane protein span at residues 410 to 430; it reads VPMWIKMLLFALVAGFLFLVY. Residues 431–452 are Lumenal-facing; it reads QAMETNQGNPFTNFLQDTKISN.

This sequence belongs to the LEM family. As to quaternary structure, interacts with LMNB1, LMNB2, BANF1, AKAP8L, GMCL and chromosomes. Post-translationally, mitosis-specific phosphorylation specifically abolishes its binding to lamin B and chromosomes.

The protein resides in the nucleus inner membrane. It localises to the chromosome. In terms of biological role, binds directly to lamin B1 and chromosomes in a mitotic phosphorylation-regulated manner. May play an important role in nuclear envelope reassembly at the end of mitosis and/or anchoring of the nuclear lamina and interphase chromosomes to the nuclear envelope. The chain is Lamina-associated polypeptide 2, isoform beta (Tmpo) from Rattus norvegicus (Rat).